A 210-amino-acid polypeptide reads, in one-letter code: Redox-sensing transcriptional repressor Rex (210 aa).

The segment at residues 17–56 (KYYRYLAELMDNDVDRISSKELSEKIGFTASQIRQDLNNF) is a DNA-binding region (H-T-H motif). 91-96 (GAGNIG) contacts NAD(+).

Belongs to the transcriptional regulatory Rex family. Homodimer.

It localises to the cytoplasm. In terms of biological role, modulates transcription in response to changes in cellular NADH/NAD(+) redox state. The sequence is that of Redox-sensing transcriptional repressor Rex from Clostridium novyi (strain NT).